The sequence spans 370 residues: tRNA N6-adenosine threonylcarbamoyltransferase (370 aa).

Fe cation-binding residues include His-122 and His-126. Residues 153 to 157 (LLSGG), Asp-186, Gly-199, and Asn-298 each bind substrate. Position 326 (Asp-326) interacts with Fe cation.

This sequence belongs to the KAE1 / TsaD family. Fe(2+) serves as cofactor.

The protein localises to the cytoplasm. The enzyme catalyses L-threonylcarbamoyladenylate + adenosine(37) in tRNA = N(6)-L-threonylcarbamoyladenosine(37) in tRNA + AMP + H(+). Required for the formation of a threonylcarbamoyl group on adenosine at position 37 (t(6)A37) in tRNAs that read codons beginning with adenine. Is involved in the transfer of the threonylcarbamoyl moiety of threonylcarbamoyl-AMP (TC-AMP) to the N6 group of A37, together with TsaE and TsaB. TsaD likely plays a direct catalytic role in this reaction. This chain is tRNA N6-adenosine threonylcarbamoyltransferase, found in Granulibacter bethesdensis (strain ATCC BAA-1260 / CGDNIH1).